Here is a 684-residue protein sequence, read N- to C-terminus: ATP-dependent zinc metalloprotease FtsH (684 aa).

Residues 1–21 are Cytoplasmic-facing; the sequence is MENKNDMFNKTPKSGKPKMFR. The helical transmembrane segment at 22–42 threads the bilayer; it reads FNLYWMYGLIFIMLVALYMTN. Residues 43–138 are Periplasmic-facing; it reads DSSGTKELGW…QVRFEEGDDA (96 aa). A helical membrane pass occupies residues 139–159; sequence IWNFLVSFGPIILLIGVWMFL. Over 160 to 684 the chain is Cytoplasmic; sequence MRRMSGGTGA…TEENKTGKIA (525 aa). 236-243 lines the ATP pocket; sequence GPPGTGKT. A Zn(2+)-binding site is contributed by histidine 459. Residue glutamate 460 is part of the active site. Zn(2+) is bound by residues histidine 463 and aspartate 534. A compositionally biased stretch (basic and acidic residues) spans 647–662; it reads EKANGKNKENADKEAE. The interval 647 to 684 is disordered; sequence EKANGKNKENADKEAEADATTENVTDTPTEENKTGKIA.

It in the central section; belongs to the AAA ATPase family. This sequence in the C-terminal section; belongs to the peptidase M41 family. In terms of assembly, homohexamer. Zn(2+) is required as a cofactor.

It localises to the cell inner membrane. In terms of biological role, acts as a processive, ATP-dependent zinc metallopeptidase for both cytoplasmic and membrane proteins. Plays a role in the quality control of integral membrane proteins. In Parabacteroides distasonis (strain ATCC 8503 / DSM 20701 / CIP 104284 / JCM 5825 / NCTC 11152), this protein is ATP-dependent zinc metalloprotease FtsH.